Reading from the N-terminus, the 491-residue chain is NADH-quinone oxidoreductase subunit N (491 aa).

14 helical membrane-spanning segments follow: residues 11–31, 38–58, 74–94, 106–126, 128–148, 163–183, 206–226, 243–263, 272–292, 301–321, 336–356, 379–399, 410–430, and 465–485; these read ATAE…TTFA, LAYG…YNTA, LLGD…LLYG, PEYY…VTSN, LLSM…LVAF, FVLG…LYGA, LLFG…VVPF, LIIA…LLVW, WQTM…LAAI, LAYS…SGVV, MFYA…IILL, FAAM…FIGF, VAAG…IGAF, and LAIA…TFVL.

This sequence belongs to the complex I subunit 2 family. As to quaternary structure, NDH-1 is composed of 14 different subunits. Subunits NuoA, H, J, K, L, M, N constitute the membrane sector of the complex.

The protein localises to the cell inner membrane. The enzyme catalyses a quinone + NADH + 5 H(+)(in) = a quinol + NAD(+) + 4 H(+)(out). In terms of biological role, NDH-1 shuttles electrons from NADH, via FMN and iron-sulfur (Fe-S) centers, to quinones in the respiratory chain. The immediate electron acceptor for the enzyme in this species is believed to be ubiquinone. Couples the redox reaction to proton translocation (for every two electrons transferred, four hydrogen ions are translocated across the cytoplasmic membrane), and thus conserves the redox energy in a proton gradient. The protein is NADH-quinone oxidoreductase subunit N of Azoarcus sp. (strain BH72).